The sequence spans 176 residues: MSSKQEPVVLGKLGSSHGIKGWLKITTYTDSVEGIFDYSPWLLKEQGEWREVKVLQWRMQGKAVVACLEGVETRDQAQALTNCEIAVTPEQMEVLPEDEFYWRDLIGCEVVNTKGYNMGKVQEIVETGSNDVLLVKANAKDGFGKAERMIPFVTEQFIQKVDLTAKQILVDWDPDF.

Positions 96 to 176 constitute a PRC barrel domain; it reads PEDEFYWRDL…QILVDWDPDF (81 aa).

This sequence belongs to the RimM family. As to quaternary structure, binds ribosomal protein uS19.

The protein resides in the cytoplasm. Its function is as follows. An accessory protein needed during the final step in the assembly of 30S ribosomal subunit, possibly for assembly of the head region. Essential for efficient processing of 16S rRNA. May be needed both before and after RbfA during the maturation of 16S rRNA. It has affinity for free ribosomal 30S subunits but not for 70S ribosomes. The protein is Ribosome maturation factor RimM of Shewanella piezotolerans (strain WP3 / JCM 13877).